The primary structure comprises 257 residues: Hydroxyacylglutathione hydrolase (257 aa).

Zn(2+) contacts are provided by His54, His56, Asp58, His59, His113, Asp137, and His175.

The protein belongs to the metallo-beta-lactamase superfamily. Glyoxalase II family. As to quaternary structure, monomer. The cofactor is Zn(2+).

The catalysed reaction is an S-(2-hydroxyacyl)glutathione + H2O = a 2-hydroxy carboxylate + glutathione + H(+). Its pathway is secondary metabolite metabolism; methylglyoxal degradation; (R)-lactate from methylglyoxal: step 2/2. Thiolesterase that catalyzes the hydrolysis of S-D-lactoyl-glutathione to form glutathione and D-lactic acid. The chain is Hydroxyacylglutathione hydrolase from Microcystis aeruginosa (strain NIES-843 / IAM M-2473).